The following is a 382-amino-acid chain: 4-hydroxybutyrate dehydrogenase (382 aa).

NAD(+) contacts are provided by residues aspartate 37, asparagine 67, 94–98 (GSSID), 138–142 (TTSGT), and lysine 159. Aspartate 193, histidine 197, histidine 261, and histidine 280 together coordinate Fe cation. NAD(+) is bound at residue histidine 280.

The protein belongs to the iron-containing alcohol dehydrogenase family. Fe cation serves as cofactor.

It carries out the reaction 4-hydroxybutanoate + NAD(+) = succinate semialdehyde + NADH + H(+). Its activity is regulated as follows. Shows competitive inhibition of GHBDH activity by the product succinic semialdehyde, and non-competitive inhibitions by the three other substrate-product combinations. The conversion of GHB to SSA is activated by two different saturating purified nudix hydrolases, B.methanolicus activator ACT and E.coli NudF. The nudix hydrolases do not activate the reverse reaction. In terms of biological role, involved in the degradation of 4-hydroxybutyrate. Catalyzes the interconversion of gamma-hydroxybutyrate (GHB) and succinic semialdehyde (SSA). The chain is 4-hydroxybutyrate dehydrogenase from Cupriavidus necator (Alcaligenes eutrophus).